Reading from the N-terminus, the 145-residue chain is Deoxyuridine 5'-triphosphate nucleotidohydrolase (145 aa).

Substrate-binding positions include 64 to 66, Asn77, 81 to 83, and Met91; these read RSG and TID.

Belongs to the dUTPase family. Requires Mg(2+) as cofactor.

The catalysed reaction is dUTP + H2O = dUMP + diphosphate + H(+). It participates in pyrimidine metabolism; dUMP biosynthesis; dUMP from dCTP (dUTP route): step 2/2. In terms of biological role, this enzyme is involved in nucleotide metabolism: it produces dUMP, the immediate precursor of thymidine nucleotides and it decreases the intracellular concentration of dUTP so that uracil cannot be incorporated into DNA. This is Deoxyuridine 5'-triphosphate nucleotidohydrolase from Leptospira borgpetersenii serovar Hardjo-bovis (strain JB197).